The following is a 79-amino-acid chain: Major outer membrane lipoprotein Lpp 3 (79 aa).

An N-terminal signal peptide occupies residues 1–21; that stretch reads MNRTNKLILGAVVLGSALLAG. Cys-22 carries the N-palmitoyl cysteine lipid modification. A lipid anchor (S-diacylglycerol cysteine) is attached at Cys-22. Repeats lie at residues 25 to 35 and 39 to 49; these read NAKIDQLSSDV and SAKVDQLSNDV. Residues 28–76 are a coiled coil; that stretch reads IDQLSSDVQTLSAKVDQLSNDVNAMRSDVQAAKDDAARANQRLDNKVLR. Lys-79 carries the post-translational modification N6-murein peptidoglycan lysine.

The protein belongs to the Lpp family. In terms of assembly, homotrimer.

The protein localises to the cell outer membrane. It localises to the secreted. The protein resides in the cell wall. A highly abundant outer membrane lipoprotein that controls the distance between the inner and outer membranes. The only protein known to be covalently linked to the peptidoglycan network (PGN). Also non-covalently binds the PGN. The link between the cell outer membrane and PGN contributes to maintenance of the structural and functional integrity of the cell envelope, and maintains the correct distance between the PGN and the outer membrane. The chain is Major outer membrane lipoprotein Lpp 3 from Salmonella paratyphi A (strain ATCC 9150 / SARB42).